A 592-amino-acid chain; its full sequence is Monocopper oxidase-like protein SKS2 (592 aa).

An N-terminal signal peptide occupies residues 1–23 (MAATDFFFAFVFSFALIFGFSFA). N-linked (GlcNAc...) asparagine glycosylation is found at N61, N110, N172, N203, N259, N280, N295, N344, N364, N433, and N447. Cu cation is bound at residue H455. N476 and N536 each carry an N-linked (GlcNAc...) asparagine glycan. Residue S564 is the site of GPI-anchor amidated serine attachment. Positions 565–592 (ATKSMTNGQLILIFSMMMVLLSSFSSFC) are cleaved as a propeptide — removed in mature form.

The protein belongs to the multicopper oxidase family. Requires Cu cation as cofactor.

Its subcellular location is the cell membrane. The polypeptide is Monocopper oxidase-like protein SKS2 (SKS2) (Arabidopsis thaliana (Mouse-ear cress)).